The primary structure comprises 450 residues: 23S rRNA (uracil(1939)-C(5))-methyltransferase RlmD (450 aa).

Positions 81, 87, 90, and 173 each coordinate [4Fe-4S] cluster. S-adenosyl-L-methionine-binding residues include Gln-276, Phe-305, Asn-310, Glu-326, Asp-353, and Asp-372. Cys-402 serves as the catalytic Nucleophile.

The protein belongs to the class I-like SAM-binding methyltransferase superfamily. RNA M5U methyltransferase family. RlmD subfamily.

The enzyme catalyses uridine(1939) in 23S rRNA + S-adenosyl-L-methionine = 5-methyluridine(1939) in 23S rRNA + S-adenosyl-L-homocysteine + H(+). Functionally, catalyzes the formation of 5-methyl-uridine at position 1939 (m5U1939) in 23S rRNA. In Idiomarina loihiensis (strain ATCC BAA-735 / DSM 15497 / L2-TR), this protein is 23S rRNA (uracil(1939)-C(5))-methyltransferase RlmD.